A 182-amino-acid chain; its full sequence is tRNA-splicing endonuclease (182 aa).

Residues Tyr-119, His-127, and Lys-158 contribute to the active site.

The protein belongs to the tRNA-intron endonuclease family. Archaeal short subfamily. Homotetramer; although the tetramer contains four active sites, only two participate in the cleavage. Therefore, it should be considered as a dimer of dimers.

The catalysed reaction is pretRNA = a 3'-half-tRNA molecule with a 5'-OH end + a 5'-half-tRNA molecule with a 2',3'-cyclic phosphate end + an intron with a 2',3'-cyclic phosphate and a 5'-hydroxyl terminus.. Its function is as follows. Endonuclease that removes tRNA introns. Cleaves pre-tRNA at the 5'- and 3'-splice sites to release the intron. The products are an intron and two tRNA half-molecules bearing 2',3' cyclic phosphate and 5'-OH termini. Recognizes a pseudosymmetric substrate in which 2 bulged loops of 3 bases are separated by a stem of 4 bp. In Saccharolobus islandicus (strain L.S.2.15 / Lassen #1) (Sulfolobus islandicus), this protein is tRNA-splicing endonuclease.